Here is a 224-residue protein sequence, read N- to C-terminus: UPF0758 protein CV_3079 (224 aa).

One can recognise an MPN domain in the interval 102 to 224 (ALSSPQQVRD…AESFAERGWL (123 aa)). Zn(2+) contacts are provided by His-173, His-175, and Asp-186. A JAMM motif motif is present at residues 173 to 186 (HNHPSGVSEPSSAD).

The protein belongs to the UPF0758 family.

The polypeptide is UPF0758 protein CV_3079 (Chromobacterium violaceum (strain ATCC 12472 / DSM 30191 / JCM 1249 / CCUG 213 / NBRC 12614 / NCIMB 9131 / NCTC 9757 / MK)).